We begin with the raw amino-acid sequence, 108 residues long: Zinc metalloproteinase/disintegrin (108 aa).

The Peptidase M12B domain occupies 1–19 (NEYQTYLTDRNPQCILNEP). Positions 20–35 (LRTDTVSTPVSGNELL) are excised as a propeptide. In terms of domain architecture, Disintegrin spans 27–108 (TPVSGNELLE…ADCPRNGFYG (82 aa)). Intrachain disulfides connect cysteine 41–cysteine 56, cysteine 43–cysteine 51, cysteine 50–cysteine 73, cysteine 64–cysteine 70, cysteine 69–cysteine 94, and cysteine 82–cysteine 101. A Cell attachment site; atypical (KGD) motif is present at residues 86–88 (KGD).

The protein belongs to the venom metalloproteinase (M12B) family. P-II subfamily. P-IIa sub-subfamily. Monomeric (disintegrin). It depends on Zn(2+) as a cofactor. In terms of tissue distribution, expressed by the venom gland.

The protein resides in the secreted. Its function is as follows. Impairs hemostasis in the envenomed animal. Inhibits platelet aggregation induced by ADP, thrombin, platelet-activating factor and collagen. Acts by inhibiting fibrinogen interaction with platelet receptors GPIIb/GPIIIa (ITGA2B/ITGB3). The protein is Zinc metalloproteinase/disintegrin of Gloydius brevicauda (Korean slamosa snake).